Consider the following 556-residue polypeptide: Single-strand DNA-binding protein (556 aa).

Disordered stretches follow at residues 1 to 95 (MDPK…SEVE) and 527 to 556 (FVRP…VNSL). Polar residues-rich tracts occupy residues 10-25 (ENIT…TSDF) and 36-51 (VNST…GSQE). 2 stretches are compositionally biased toward basic and acidic residues: residues 52-73 (TPEH…RLDA) and 539-548 (DSRRTYESRP).

In terms of assembly, interacts with host VIP2 that promotes T-DNA integration into the host genome. Forms a complex made of virE2 and host proteins VIP1 and VBF. Forms heterodimers with the chaperone protein virE1 that prevent virE2 anarchic homopolymerization. Interacts with A.thaliana VIP1 that mediates its translocation to the host nucleus. Forms a complex made of VirE2, host VIP1 and VIP2 and single-stranded DNA (ssDNA).

It is found in the secreted. Its subcellular location is the host nucleus. Functionally, involved in DNA transformation; mediates the nuclear uptake of single-stranded DNA copies of the transferred DNA (T-DNA) element. Binds single-stranded but not double-stranded DNA regardless of nucleotide sequence composition. This chain is Single-strand DNA-binding protein (virE2), found in Agrobacterium fabrum (strain C58 / ATCC 33970) (Agrobacterium tumefaciens (strain C58)).